A 560-amino-acid chain; its full sequence is Flagellar M-ring protein (560 aa).

Residues 26-46 form a helical membrane-spanning segment; the sequence is IPLIVAGSAAVAIVVAMVLWA. A disordered region spans residues 304–372; it reads VGAGYPGGVP…TSNYEVDRTI (69 aa). Positions 331 to 353 are enriched in low complexity; the sequence is PPTNQQNAQNTPQTSTSTNSNSA. Polar residues predominate over residues 354 to 366; it reads GPRSTQRNETSNY. Residues 455-475 form a helical membrane-spanning segment; the sequence is FIDQLLAAGRWLLVLVVAWIL.

Belongs to the FliF family. As to quaternary structure, the basal body constitutes a major portion of the flagellar organelle and consists of four rings (L,P,S, and M) mounted on a central rod. The M ring is integral to the inner membrane of the cell and may be connected to the flagellar rod via the S ring. The S (supramembrane ring) lies just distal to the M ring. The L and P rings lie in the outer membrane and the periplasmic space, respectively.

It is found in the cell inner membrane. The protein localises to the bacterial flagellum basal body. In terms of biological role, the M ring may be actively involved in energy transduction. This chain is Flagellar M-ring protein (fliF), found in Salmonella typhimurium (strain LT2 / SGSC1412 / ATCC 700720).